A 1217-amino-acid chain; its full sequence is ATP-dependent helicase/nuclease subunit A (1217 aa).

The UvrD-like helicase ATP-binding domain occupies 10–475 (VIWTDAQWQS…IDLSQNFRSR (466 aa)). Position 31–38 (31–38 (AAAGSGKT)) interacts with ATP. One can recognise a UvrD-like helicase C-terminal domain in the interval 476-786 (KEVLSTTNYI…RMMTIHSSKG (311 aa)).

The protein belongs to the helicase family. AddA subfamily. Heterodimer of AddA and AddB/RexB. The cofactor is Mg(2+).

It catalyses the reaction Couples ATP hydrolysis with the unwinding of duplex DNA by translocating in the 3'-5' direction.. The enzyme catalyses ATP + H2O = ADP + phosphate + H(+). Functionally, the heterodimer acts as both an ATP-dependent DNA helicase and an ATP-dependent, dual-direction single-stranded exonuclease. Recognizes the chi site generating a DNA molecule suitable for the initiation of homologous recombination. The AddA nuclease domain is required for chi fragment generation; this subunit has the helicase and 3' -&gt; 5' nuclease activities. The sequence is that of ATP-dependent helicase/nuclease subunit A from Staphylococcus aureus (strain MW2).